The following is a 275-amino-acid chain: Urease accessory protein UreD (275 aa).

Belongs to the UreD family. In terms of assembly, ureD, UreF and UreG form a complex that acts as a GTP-hydrolysis-dependent molecular chaperone, activating the urease apoprotein by helping to assemble the nickel containing metallocenter of UreC. The UreE protein probably delivers the nickel.

It localises to the cytoplasm. Its function is as follows. Required for maturation of urease via the functional incorporation of the urease nickel metallocenter. This Cereibacter sphaeroides (strain ATCC 17025 / ATH 2.4.3) (Rhodobacter sphaeroides) protein is Urease accessory protein UreD.